We begin with the raw amino-acid sequence, 602 residues long: Elongation factor 4 (602 aa).

Residues 8 to 190 (DLIRNFSIVA…AIVHRLPPPK (183 aa)) form the tr-type G domain. Residues 20–25 (DHGKST) and 137–140 (NKID) contribute to the GTP site.

Belongs to the TRAFAC class translation factor GTPase superfamily. Classic translation factor GTPase family. LepA subfamily.

Its subcellular location is the cell inner membrane. The catalysed reaction is GTP + H2O = GDP + phosphate + H(+). Functionally, required for accurate and efficient protein synthesis under certain stress conditions. May act as a fidelity factor of the translation reaction, by catalyzing a one-codon backward translocation of tRNAs on improperly translocated ribosomes. Back-translocation proceeds from a post-translocation (POST) complex to a pre-translocation (PRE) complex, thus giving elongation factor G a second chance to translocate the tRNAs correctly. Binds to ribosomes in a GTP-dependent manner. The sequence is that of Elongation factor 4 from Cereibacter sphaeroides (strain ATCC 17023 / DSM 158 / JCM 6121 / CCUG 31486 / LMG 2827 / NBRC 12203 / NCIMB 8253 / ATH 2.4.1.) (Rhodobacter sphaeroides).